The chain runs to 156 residues: Endogenous retrovirus group K member 9 Pro protein (156 aa).

One can recognise a Peptidase A2 domain in the interval 21–96 (FEGLVDTGAD…IPLNLWGRDL (76 aa)). D26 is a catalytic residue. Positions 111–156 (YSPTSQKIMTKRGYIPGKGLGKNEDGIKIPFEAKINQKREGIGYPF) constitute a G-patch domain.

It belongs to the peptidase A2 family. HERV class-II K(HML-2) subfamily. Active as a homodimer. Autoproteolytically processed at the N-terminus. Expected C-terminal autoprocessing not detected. The sequence shown is that of the processed Pro protein.

It catalyses the reaction Processing at the authentic HIV-1 PR recognition site and release of the mature p17 matrix and the p24 capsid protein, as a result of the cleavage of the -SQNY-|-PIVQ- cleavage site.. Retroviral proteases have roles in the processing of the primary translation products and the maturation of the viral particle. Endogenous Pro proteins may have kept, lost or modified their original function during evolution. The protein is Endogenous retrovirus group K member 9 Pro protein (ERVK-9) of Homo sapiens (Human).